Here is a 631-residue protein sequence, read N- to C-terminus: 1-deoxy-D-xylulose-5-phosphate synthase (631 aa).

Residues His78 and 119–121 contribute to the thiamine diphosphate site; that span reads AHS. Asp150 provides a ligand contact to Mg(2+). Thiamine diphosphate-binding positions include 151–152, Asn179, Tyr286, and Glu368; that span reads GA. Asn179 lines the Mg(2+) pocket.

This sequence belongs to the transketolase family. DXPS subfamily. Homodimer. Mg(2+) serves as cofactor. It depends on thiamine diphosphate as a cofactor.

The enzyme catalyses D-glyceraldehyde 3-phosphate + pyruvate + H(+) = 1-deoxy-D-xylulose 5-phosphate + CO2. It functions in the pathway metabolic intermediate biosynthesis; 1-deoxy-D-xylulose 5-phosphate biosynthesis; 1-deoxy-D-xylulose 5-phosphate from D-glyceraldehyde 3-phosphate and pyruvate: step 1/1. In terms of biological role, catalyzes the acyloin condensation reaction between C atoms 2 and 3 of pyruvate and glyceraldehyde 3-phosphate to yield 1-deoxy-D-xylulose-5-phosphate (DXP). In Verminephrobacter eiseniae (strain EF01-2), this protein is 1-deoxy-D-xylulose-5-phosphate synthase.